A 389-amino-acid polypeptide reads, in one-letter code: Glutamate 5-kinase (389 aa).

Lys-16 lines the ATP pocket. 3 residues coordinate substrate: Ser-56, Asp-143, and Asn-155. 175-176 (SD) contributes to the ATP binding site. In terms of domain architecture, PUA spans 281-358 (AGELHVDEGA…AEIEAILGYA (78 aa)).

This sequence belongs to the glutamate 5-kinase family.

It is found in the cytoplasm. It catalyses the reaction L-glutamate + ATP = L-glutamyl 5-phosphate + ADP. It functions in the pathway amino-acid biosynthesis; L-proline biosynthesis; L-glutamate 5-semialdehyde from L-glutamate: step 1/2. Functionally, catalyzes the transfer of a phosphate group to glutamate to form L-glutamate 5-phosphate. The polypeptide is Glutamate 5-kinase (Rhizobium rhizogenes (strain K84 / ATCC BAA-868) (Agrobacterium radiobacter)).